We begin with the raw amino-acid sequence, 328 residues long: Porphobilinogen deaminase (328 aa).

Cys-250 carries the S-(dipyrrolylmethanemethyl)cysteine modification.

This sequence belongs to the HMBS family. As to quaternary structure, monomer. Dipyrromethane serves as cofactor.

It catalyses the reaction 4 porphobilinogen + H2O = hydroxymethylbilane + 4 NH4(+). Its pathway is porphyrin-containing compound metabolism; protoporphyrin-IX biosynthesis; coproporphyrinogen-III from 5-aminolevulinate: step 2/4. In terms of biological role, tetrapolymerization of the monopyrrole PBG into the hydroxymethylbilane pre-uroporphyrinogen in several discrete steps. The sequence is that of Porphobilinogen deaminase from Burkholderia ambifaria (strain ATCC BAA-244 / DSM 16087 / CCUG 44356 / LMG 19182 / AMMD) (Burkholderia cepacia (strain AMMD)).